Here is a 146-residue protein sequence, read N- to C-terminus: Leghemoglobin Lb120-1 (146 aa).

The 145-residue stretch at 2–146 folds into the Globin domain; sequence GFTEKQEALV…LASAIKKAMN (145 aa). Residues Y24 and Y29 each carry the nitrated tyrosine modification. S44 serves as a coordination point for heme b. S44 is modified (phosphoserine). Residue H61 coordinates O2. Residues K64, H93, and K96 each contribute to the heme b site. Y134 carries the nitrated tyrosine modification.

This sequence belongs to the plant globin family. Monomer. In terms of processing, nitrated in effective nodules and particularly in hypoxic conditions; this mechanism may play a protective role in the symbiosis by buffering toxic peroxynitrite NO(2)(-). Nitration level decrease during nodule senescence. Phosphorylation at Ser-44 disrupts the molecular environment of its porphyrin ring oxygen binding pocket, thus leading to a reduced oxygen consumption and to the delivery of oxygen O(2) to symbiosomes. Root nodules.

It is found in the cytoplasm. The protein localises to the cytosol. It localises to the nucleus. Leghemoglobin that reversibly binds oxygen O(2) through a pentacoordinated heme iron. In root nodules, facilitates the diffusion of oxygen to the bacteroids while preventing the bacterial nitrogenase from being inactivated by buffering dioxygen, nitric oxide and carbon monoxide, and promoting the formation of reactive oxygen species (ROS, e.g. H(2)O(2)). This role is essential for symbiotic nitrogen fixation (SNF). The protein is Leghemoglobin Lb120-1 of Pisum sativum (Garden pea).